Reading from the N-terminus, the 257-residue chain is ATP synthase delta chain, chloroplastic (257 aa).

A chloroplast-targeting transit peptide spans 1–70; that stretch reads MAALQNPVAL…PRGGALGTRM (70 aa).

This sequence belongs to the ATPase delta chain family. In terms of assembly, F-type ATPases have 2 components, CF(1) - the catalytic core - and CF(0) - the membrane proton channel. CF(1) has five subunits: alpha(3), beta(3), gamma(1), delta(1), epsilon(1). CF(0) has three main subunits: a, b and c.

The protein resides in the plastid. It localises to the chloroplast thylakoid membrane. This protein seems to be part of the stalk that links CF(0) to CF(1). It either transmits conformational changes from CF(0) into CF(1) or is implicated in proton conduction. The sequence is that of ATP synthase delta chain, chloroplastic (ATPD) from Spinacia oleracea (Spinach).